The following is a 104-amino-acid chain: Hydrogen cyanide synthase subunit HcnA (104 aa).

Residues 16–97 (ADMTIHLNGQ…GMRVETESNR (82 aa)) form the 2Fe-2S ferredoxin-type domain. [2Fe-2S] cluster contacts are provided by Cys60, Cys65, Cys68, and Cys81.

Heterotrimer of HcnA, HcnB and HcnC.

Its subcellular location is the cell membrane. It catalyses the reaction glycine + 2 A = hydrogen cyanide + 2 AH2 + CO2. Oxygen is necessary for cyanogenesis. Activated by succinate, glycine methyl ester, glucose and D,L-methionine in addition to glycine. Phenazine methosulfate, methylene blue, 2,6-dichlorophenolindophenol (DCIP) and ferricyanide can replace oxygen for the reaction. Inhibited by pyrrolnitrin and acriflavine at 1 mM concentration. A three-component membrane-bound flavoenzyme that catalyzes the formation of hydrogen cyanide, a secondary metabolite, by transfer of electrons to a cyanide-resistant branch of the aerobic respiratory chain. The polypeptide is Hydrogen cyanide synthase subunit HcnA (Pseudomonas aeruginosa (strain ATCC 15692 / DSM 22644 / CIP 104116 / JCM 14847 / LMG 12228 / 1C / PRS 101 / PAO1)).